Here is a 127-residue protein sequence, read N- to C-terminus: Putative histone H3.3-like type 3 (127 aa).

N6-acetyllysine is present on residues lysine 6 and lysine 15. N6-methylated lysine is present on residues lysine 19, lysine 28, and lysine 71.

Belongs to the histone H3 family. As to quaternary structure, the nucleosome is a histone octamer containing two molecules each of H2A, H2B, H3 and H4 assembled in one H3-H4 heterotetramer and two H2A-H2B heterodimers. The octamer wraps approximately 147 bp of DNA. Post-translationally, acetylation is generally linked to gene activation.

The protein localises to the nucleus. It is found in the chromosome. Putative variant histone H3 which may replace conventional H3 in a subset of nucleosomes. Nucleosomes wrap and compact DNA into chromatin, limiting DNA accessibility to the cellular machineries which require DNA as a template. Histones thereby play a central role in transcription regulation, DNA repair, DNA replication and chromosomal stability. DNA accessibility is regulated via a complex set of post-translational modifications of histones, also called histone code, and nucleosome remodeling. In Caenorhabditis elegans, this protein is Putative histone H3.3-like type 3 (his-69).